A 242-amino-acid polypeptide reads, in one-letter code: Spiralin (242 aa).

The signal sequence occupies residues 1 to 23 (MKKLLSILAVFGVSAVGTTSVVA). The N-palmitoyl cysteine moiety is linked to residue cysteine 24. Cysteine 24 carries the S-diacylglycerol cysteine lipid modification.

This sequence belongs to the spiralin family. In terms of assembly, seems to occur as dimer, tetramers, and large oligomers of identical chains. Post-translationally, palmitate and stearate are the major lipid components.

The protein localises to the cell membrane. In terms of biological role, major membrane protein of spiroplasma. The chain is Spiralin (spi) from Spiroplasma melliferum.